Consider the following 382-residue polypeptide: ORC1-type DNA replication protein 1 (382 aa).

ATP-binding positions include 63 to 67 (TGKTA), Y205, and R217.

Belongs to the CDC6/cdc18 family. Monomer. Interacts with MCM via the WH domain. In terms of processing, autophosphorylated on a serine. Phosphorylation is stimulated by binding to MCM. Both single-stranded DNA and double-stranded DNA inhibit the phosphorylation reaction.

Its function is as follows. Involved in regulation of DNA replication. May play an essential role in origin recognition. Binds to DNA, with a preference for origin-specific double-stranded sequences. Does not bind single-stranded DNA. Inhibits MCM helicase activity but does not affect its oligomeric state. The protein is ORC1-type DNA replication protein 1 (cdc6-1) of Methanothermobacter thermautotrophicus (strain ATCC 29096 / DSM 1053 / JCM 10044 / NBRC 100330 / Delta H) (Methanobacterium thermoautotrophicum).